The sequence spans 410 residues: Argininosuccinate synthase (410 aa).

ATP-binding positions include 11–19 (AYSGGLDTS) and alanine 37. L-citrulline is bound by residues tyrosine 88 and serine 93. 116 to 124 (SHGCTGKGN) is an ATP binding site. Residues threonine 120, asparagine 124, and aspartate 125 each contribute to the L-aspartate site. L-citrulline is bound at residue asparagine 124. L-citrulline contacts are provided by arginine 128, serine 181, serine 190, glutamate 269, and tyrosine 281.

The protein belongs to the argininosuccinate synthase family. Type 1 subfamily. Homotetramer.

It localises to the cytoplasm. It carries out the reaction L-citrulline + L-aspartate + ATP = 2-(N(omega)-L-arginino)succinate + AMP + diphosphate + H(+). Its pathway is amino-acid biosynthesis; L-arginine biosynthesis; L-arginine from L-ornithine and carbamoyl phosphate: step 2/3. In Schizosaccharomyces pombe (strain 972 / ATCC 24843) (Fission yeast), this protein is Argininosuccinate synthase (arg12).